Here is a 347-residue protein sequence, read N- to C-terminus: Holliday junction branch migration complex subunit RuvB (347 aa).

The tract at residues 1-183 (MSDERVVTPR…FGSVHRLEFY (183 aa)) is large ATPase domain (RuvB-L). ATP-binding positions include Leu-22, Arg-23, Gly-64, Lys-67, Thr-68, Ser-69, 130 to 132 (EDF), Arg-173, Tyr-183, and Arg-220. Thr-68 contacts Mg(2+). The segment at 184 to 254 (SVDALYEIVM…VARDALAKLE (71 aa)) is small ATPAse domain (RuvB-S). Residues 257 to 347 (HLGLDENDRR…NGAEQGRLWT (91 aa)) are head domain (RuvB-H). DNA-binding residues include Arg-312 and Arg-317.

Belongs to the RuvB family. In terms of assembly, homohexamer. Forms an RuvA(8)-RuvB(12)-Holliday junction (HJ) complex. HJ DNA is sandwiched between 2 RuvA tetramers; dsDNA enters through RuvA and exits via RuvB. An RuvB hexamer assembles on each DNA strand where it exits the tetramer. Each RuvB hexamer is contacted by two RuvA subunits (via domain III) on 2 adjacent RuvB subunits; this complex drives branch migration. In the full resolvosome a probable DNA-RuvA(4)-RuvB(12)-RuvC(2) complex forms which resolves the HJ.

It is found in the cytoplasm. The enzyme catalyses ATP + H2O = ADP + phosphate + H(+). Functionally, the RuvA-RuvB-RuvC complex processes Holliday junction (HJ) DNA during genetic recombination and DNA repair, while the RuvA-RuvB complex plays an important role in the rescue of blocked DNA replication forks via replication fork reversal (RFR). RuvA specifically binds to HJ cruciform DNA, conferring on it an open structure. The RuvB hexamer acts as an ATP-dependent pump, pulling dsDNA into and through the RuvAB complex. RuvB forms 2 homohexamers on either side of HJ DNA bound by 1 or 2 RuvA tetramers; 4 subunits per hexamer contact DNA at a time. Coordinated motions by a converter formed by DNA-disengaged RuvB subunits stimulates ATP hydrolysis and nucleotide exchange. Immobilization of the converter enables RuvB to convert the ATP-contained energy into a lever motion, pulling 2 nucleotides of DNA out of the RuvA tetramer per ATP hydrolyzed, thus driving DNA branch migration. The RuvB motors rotate together with the DNA substrate, which together with the progressing nucleotide cycle form the mechanistic basis for DNA recombination by continuous HJ branch migration. Branch migration allows RuvC to scan DNA until it finds its consensus sequence, where it cleaves and resolves cruciform DNA. This Roseiflexus castenholzii (strain DSM 13941 / HLO8) protein is Holliday junction branch migration complex subunit RuvB.